The primary structure comprises 1209 residues: DNA-directed RNA polymerase subunit beta' (1209 aa).

The Zn(2+) site is built by Cys60, Cys62, Cys75, and Cys78. Residues Asp450, Asp452, and Asp454 each contribute to the Mg(2+) site. Zn(2+) contacts are provided by Cys819, Cys893, Cys900, and Cys903.

It belongs to the RNA polymerase beta' chain family. As to quaternary structure, the RNAP catalytic core consists of 2 alpha, 1 beta, 1 beta' and 1 omega subunit. When a sigma factor is associated with the core the holoenzyme is formed, which can initiate transcription. It depends on Mg(2+) as a cofactor. Zn(2+) is required as a cofactor.

It carries out the reaction RNA(n) + a ribonucleoside 5'-triphosphate = RNA(n+1) + diphosphate. Functionally, DNA-dependent RNA polymerase catalyzes the transcription of DNA into RNA using the four ribonucleoside triphosphates as substrates. This chain is DNA-directed RNA polymerase subunit beta', found in Streptococcus mutans serotype c (strain ATCC 700610 / UA159).